We begin with the raw amino-acid sequence, 379 residues long: Stimulator of interferon genes protein (379 aa).

Helical transmembrane passes span 20–40 (VAAF…GEPS), 87–107 (ACLG…YFYV), and 115–135 (LPLT…ILLG). Residues cysteine 88 and cysteine 91 are each lipidated (S-palmitoyl cysteine). The cyclic dinucleotide-binding domain (CBD) stretch occupies residues 153-340 (FNVAHGLAWS…KHLRQEEREE (188 aa)). 4 residues coordinate 2',3'-cGAMP: serine 162, tyrosine 167, arginine 238, and threonine 263. Residues serine 162, tyrosine 167, 238-241 (RVYT), and threonine 263 each bind 3',3'-c-di-GMP. Positions 167, 238, and 263 each coordinate 2',3'-cUAMP. Residues 340 to 379 (EVTMGTAGTFVAPGSSTLHQEPELLISGMDQPLPLRTDIF) are C-terminal tail (CTT). Phosphoserine is present on serine 355. Residue threonine 356 is modified to Phosphothreonine. Positions 363–366 (LLIS) match the pLxIS motif motif. Serine 366 carries the post-translational modification Phosphoserine; by TBK1.

This sequence belongs to the STING family. As to quaternary structure, homodimer; forms a homodimer in absence of cyclic nucleotide (c-di-GMP or cGAMP). Homotetramer; in presence of cyclic nucleotide (c-di-GMP or cGAMP), forms tetramers and higher-order oligomers through side-by-side packing. Interacts (when phosphorylated) with IRF3; following activation and phosphorylation on the pLxIS motif by TBK1, recruits IRF3. Interacts with TBK1; when homodimer, leading to subsequent production of IFN-beta. Interacts (via transmembrane domain) with TMEM203. In terms of processing, phosphorylation by TBK1 leads to activation and production of IFN-beta. Following cyclic nucleotide (c-di-GMP or cGAMP)-binding, activation and translocation from the endoplasmic reticulum, STING1 is phosphorylated by TBK1 at Ser-366 in the pLxIS motif. The phosphorylated pLxIS motif constitutes an IRF3-binding motif, leading to recruitment of the transcription factor IRF3 to induce type-I interferons and other cytokines. In contrast, lacks phosphorylation site at position 358, leading to reduced production of type-I interferons and other cytokines.

The protein localises to the endoplasmic reticulum membrane. It is found in the cytoplasm. The protein resides in the perinuclear region. Its subcellular location is the endoplasmic reticulum-Golgi intermediate compartment membrane. It localises to the golgi apparatus membrane. The protein localises to the cytoplasmic vesicle. It is found in the autophagosome membrane. The protein resides in the mitochondrion outer membrane. Its subcellular location is the cell membrane. The enzyme catalyses H(+)(in) = H(+)(out). Facilitator of innate immune signaling that acts as a sensor of cytosolic DNA from bacteria and viruses and promotes low production of type I interferon (IFN-alpha and IFN-beta). Compared to other mammals, STING1-dependent type I interferon induction is strongly reduced in bats, suggesting that the cGAS-STING pathway promotes a limited inflammatory response. Innate immune response is triggered in response to non-CpG double-stranded DNA from viruses and bacteria delivered to the cytoplasm. Acts by binding cyclic dinucleotides: recognizes and binds cyclic di-GMP (c-di-GMP), a second messenger produced by bacteria, cyclic UMP-AMP (2',3'-cUAMP), and cyclic GMP-AMP (cGAMP), a messenger produced by CGAS in response to DNA virus in the cytosol. Upon binding to c-di-GMP, cUAMP or cGAMP, STING1 oligomerizes, translocates from the endoplasmic reticulum and is phosphorylated by TBK1 on the pLxIS motif, leading to recruitment and subsequent activation of the transcription factor IRF3 to induce expression of type I interferon and exert a potent anti-viral state. In addition to promote the production of type I interferons, plays a direct role in autophagy. Following cGAMP-binding, STING1 buds from the endoplasmic reticulum into COPII vesicles, which then form the endoplasmic reticulum-Golgi intermediate compartment (ERGIC). The ERGIC serves as the membrane source for WIPI2 recruitment and LC3 lipidation, leading to formation of autophagosomes that target cytosolic DNA or DNA viruses for degradation by the lysosome. Promotes autophagy by acting as a proton channel that directs proton efflux from the Golgi to facilitate MAP1LC3B/LC3B lipidation. The autophagy- and interferon-inducing activities can be uncoupled and autophagy induction is independent of TBK1 phosphorylation. This Eidolon helvum (Straw-colored fruit bat) protein is Stimulator of interferon genes protein.